The primary structure comprises 293 residues: Epidermal growth factor-like protein 8 (293 aa).

The first 28 residues, 1 to 28 (MGLWAELCISLRGLSFFLVLMTGEGTRG), serve as a signal peptide directing secretion. The EMI domain maps to 34 to 112 (SLGVCSKQTL…PHPGALTCDA (79 aa)). 9 disulfides stabilise this stretch: cysteine 38–cysteine 97, cysteine 65–cysteine 71, cysteine 96–cysteine 110, cysteine 114–cysteine 124, cysteine 118–cysteine 130, cysteine 132–cysteine 141, cysteine 148–cysteine 159, cysteine 155–cysteine 168, and cysteine 170–cysteine 183. N-linked (GlcNAc...) asparagine glycosylation occurs at asparagine 50. Residues 111-142 (DAICSKPCLNGGVCTGPDRCECAPGWGGKHCH) enclose the EGF-like 1 domain. Residues 144–184 (DVDECRASLTLCSHGCLNTLGSFLCSCPHPLVLGLDGRTCA) enclose the EGF-like 2; calcium-binding domain. Residues 206-235 (SEEERALRWEVAELRGRLEKLEQWATQAGA) adopt a coiled-coil conformation.

Ubiquitously expressed in brain, kidney, thymus and lung.

It is found in the secreted. This Mus musculus (Mouse) protein is Epidermal growth factor-like protein 8 (Egfl8).